The following is a 333-amino-acid chain: Ribosomal RNA small subunit methyltransferase H (333 aa).

Residues 34 to 36 (GGH), D59, F86, D112, and Q119 contribute to the S-adenosyl-L-methionine site.

It belongs to the methyltransferase superfamily. RsmH family.

The protein resides in the cytoplasm. The enzyme catalyses cytidine(1402) in 16S rRNA + S-adenosyl-L-methionine = N(4)-methylcytidine(1402) in 16S rRNA + S-adenosyl-L-homocysteine + H(+). Functionally, specifically methylates the N4 position of cytidine in position 1402 (C1402) of 16S rRNA. The polypeptide is Ribosomal RNA small subunit methyltransferase H (Prosthecochloris aestuarii (strain DSM 271 / SK 413)).